Consider the following 711-residue polypeptide: Ferric/cupric reductase transmembrane component 2 (711 aa).

The signal sequence occupies residues methionine 1–alanine 23. Residues lysine 24–asparagine 164 are Extracellular-facing. 4 N-linked (GlcNAc...) asparagine glycosylation sites follow: asparagine 85, asparagine 108, asparagine 120, and asparagine 134. The helical transmembrane segment at isoleucine 165 to histidine 185 threads the bilayer. The Cytoplasmic segment spans residues cysteine 186 to arginine 235. A helical membrane pass occupies residues leucine 236–tyrosine 256. Over glutamate 257 to serine 280 the chain is Extracellular. The region spanning serine 280–isoleucine 414 is the Ferric oxidoreductase domain. Residues glycine 281–leucine 301 traverse the membrane as a helical segment. Residues glutamate 302–lysine 317 lie on the Cytoplasmic side of the membrane. Residues histidine 316 and histidine 330 each contribute to the heme site. A helical transmembrane segment spans residues tryptophan 318–alanine 340. Asparagine 341 is a glycosylation site (N-linked (GlcNAc...) asparagine). Over asparagine 341–tryptophan 353 the chain is Extracellular. Residues glutamine 354 to phenylalanine 374 traverse the membrane as a helical segment. Topologically, residues arginine 375–tyrosine 377 are cytoplasmic. A helical membrane pass occupies residues phenylalanine 378–tryptophan 398. The heme site is built by histidine 386 and histidine 400. The Extracellular segment spans residues glutamate 399–histidine 400. Residues valine 401–isoleucine 423 form a helical membrane-spanning segment. The region spanning alanine 415 to valine 534 is the FAD-binding FR-type domain. Residues arginine 424–tryptophan 711 are Cytoplasmic-facing. Histidine 479–aspartate 485 provides a ligand contact to FAD. NADP(+)-binding positions include glycine 526–glycine 529 and cysteine 677–glycine 678.

The protein belongs to the ferric reductase (FRE) family. The cofactor is FAD. It depends on heme as a cofactor.

Its subcellular location is the cell membrane. The enzyme catalyses 2 a Fe(II)-siderophore + NADP(+) + H(+) = 2 a Fe(III)-siderophore + NADPH. In terms of biological role, metalloreductase responsible for reducing extracellular iron and copper prior to import. Catalyzes the reductive uptake of Fe(3+)-salts and Fe(3+) bound to catecholate or hydroxamate siderophores. Fe(3+) is reduced to Fe(2+), which then dissociates from the siderophore and can be imported by the high-affinity Fe(2+) transport complex in the plasma membrane. Also participates in Cu(2+) reduction and Cu(+) uptake. The chain is Ferric/cupric reductase transmembrane component 2 (FRE2) from Saccharomyces cerevisiae (strain ATCC 204508 / S288c) (Baker's yeast).